A 362-amino-acid chain; its full sequence is METQVLTPHVYWAQRHRELYLRVELSDVQNPAISITDNVLHFKAQGHGAKGDNVYEFHLEFLDLVKPEPAYRLTQRQVNITVQKKGSHWWERLTKQEKRPLFLAPDFDRWLDESDAEMELRAKEEERLNKLRLEREGSPETLTNLKKGYLFMYNLVQLLGFSWIFVNLTVRFFILGKESFYDTFHNVADMMYFCQMLALVETLNAAIGVTSTPVLPALIQFLGRNFILFLVFGTMEEMQNKAVVFFVFYSWSAIEIFRYPFYMLSCIDMDWKVLTWLRYTMWIPLYPLGCLSEAVAVIQSIPVFNESGRFSFTLPYPVKMKVRFSFFLQVYLVMLFLGLYINFRHLYKQRRRRYGQKKKKLH.

M1 carries the N-acetylmethionine modification. Residues 1 to 149 are Cytoplasmic-facing; the sequence is METQVLTPHV…ETLTNLKKGY (149 aa). Residues 5–94 form the CS domain; it reads VLTPHVYWAQ…KGSHWWERLT (90 aa). T7 bears the Phosphothreonine mark. The stretch at 111–138 forms a coiled coil; sequence LDESDAEMELRAKEEERLNKLRLEREGS. A Phosphoserine modification is found at S114. A helical transmembrane segment spans residues 150 to 170; it reads LFMYNLVQLLGFSWIFVNLTV. Residues 171 to 189 are Lumenal-facing; the sequence is RFFILGKESFYDTFHNVAD. A helical membrane pass occupies residues 190–210; that stretch reads MMYFCQMLALVETLNAAIGVT. Over 211–212 the chain is Cytoplasmic; it reads ST. Residues 213–233 form a helical membrane-spanning segment; sequence PVLPALIQFLGRNFILFLVFG. The Lumenal segment spans residues 234 to 242; that stretch reads TMEEMQNKA. A helical membrane pass occupies residues 243-263; it reads VVFFVFYSWSAIEIFRYPFYM. The Cytoplasmic segment spans residues 264–280; the sequence is LSCIDMDWKVLTWLRYT. The chain crosses the membrane as a helical span at residues 281-301; the sequence is MWIPLYPLGCLSEAVAVIQSI. Active-site residues include Y286 and E293. Over 302 to 322 the chain is Lumenal; sequence PVFNESGRFSFTLPYPVKMKV. Residues 323-343 form a helical membrane-spanning segment; it reads RFSFFLQVYLVMLFLGLYINF. Topologically, residues 344-362 are cytoplasmic; sequence RHLYKQRRRRYGQKKKKLH.

This sequence belongs to the very long-chain fatty acids dehydratase HACD family. May interact with enzymes of the ELO family (including ELOVL1); with those enzymes that mediate condensation, the first of the four steps of the reaction cycle responsible for fatty acids elongation, may be part of a larger fatty acids elongase complex. Interacts with RAC1. Associates with internalized insulin receptor/INSR complexes on Golgi/endosomal membranes; HACD3/PTPLAD1 together with ATIC and PRKAA2/AMPK2 is proposed to be part of a signaling network regulating INSR autophosphorylation and endocytosis.

Its subcellular location is the endoplasmic reticulum membrane. It catalyses the reaction a very-long-chain (3R)-3-hydroxyacyl-CoA = a very-long-chain (2E)-enoyl-CoA + H2O. It carries out the reaction (3R)-hydroxyhexadecanoyl-CoA = (2E)-hexadecenoyl-CoA + H2O. It participates in lipid metabolism; fatty acid biosynthesis. Catalyzes the third of the four reactions of the long-chain fatty acids elongation cycle. This endoplasmic reticulum-bound enzymatic process, allows the addition of two carbons to the chain of long- and very long-chain fatty acids/VLCFAs per cycle. This enzyme catalyzes the dehydration of the 3-hydroxyacyl-CoA intermediate into trans-2,3-enoyl-CoA, within each cycle of fatty acid elongation. Thereby, it participates in the production of VLCFAs of different chain lengths that are involved in multiple biological processes as precursors of membrane lipids and lipid mediators. Involved in Rac1-signaling pathways leading to the modulation of gene expression. Promotes insulin receptor/INSR autophosphorylation and is involved in INSR internalization. This Mus musculus (Mouse) protein is Very-long-chain (3R)-3-hydroxyacyl-CoA dehydratase 3.